The chain runs to 300 residues: Free fatty acid receptor 1 (300 aa).

The Extracellular portion of the chain corresponds to 1–8 (MDLPPQLS). A helical transmembrane segment spans residues 9 to 31 (FALYVSAFALGFPLNLLAIRGAV). The Cytoplasmic segment spans residues 32 to 41 (SHAKLRLTPS). Residues 42–64 (LVYTLHLGCSDLLLAITLPLKAV) traverse the membrane as a helical segment. Topologically, residues 65-79 (EALASGAWPLPLPFC) are extracellular. A disulfide bridge links Cys-79 with Cys-170. A helical transmembrane segment spans residues 80–101 (PVFALAHFAPLYAGGGFLAALS). Residues 102–121 (AGRYLGAAFPFGYQAIRRPR) lie on the Cytoplasmic side of the membrane. The helical transmembrane segment at 122–142 (YSWGVCVAIWALVLCHLGLAL) threads the bilayer. Residues 143-178 (GLETSGSWLDNSTSSLGINIPVNGSPVCLEAWDPDS) lie on the Extracellular side of the membrane. Asn-153 carries an N-linked (GlcNAc...) asparagine glycan. Residues 179-200 (ARPARLSFSILLFFLPLVITAF) traverse the membrane as a helical segment. Over 201–223 (CYVGCLRALVRSGLSHKRKLRAA) the chain is Cytoplasmic. Residues 224–248 (WVAGGALLTLLLCLGPYNASNVASF) traverse the membrane as a helical segment. Residues 249-256 (INPDLGGS) lie on the Extracellular side of the membrane. The helical transmembrane segment at 257 to 279 (WRKLGLITGAWSVVLNPLVTGYL) threads the bilayer. Over 280 to 300 (GTGPGRGTICVTRTQRGTIQK) the chain is Cytoplasmic.

The protein belongs to the G-protein coupled receptor 1 family. As to expression, expressed in pancreatic islet beta cells (at protein level). Expressed in pancreatic islet beta cells.

The protein localises to the cell membrane. Is also activated by synthetic agonists, such as AM-8182, AM-6331 and TAK-875 (fasiglifam). AM-8182 is a full agonist, while AM-6331 and TAK-875 (fasiglifam) are partial agonists that potentiate the activity of the endogenous ligands, such as alpha-linolenic acid and gamma-linolenic acid. In terms of biological role, G-protein coupled receptor for medium and long chain saturated and unsaturated fatty acids that plays an important role in glucose homeostasis. Fatty acid binding increases glucose-stimulated insulin secretion, and may also enhance the secretion of glucagon-like peptide 1 (GLP-1). May also play a role in bone homeostasis; receptor signaling activates pathways that inhibit osteoclast differentiation. Ligand binding leads to a conformation change that triggers signaling via G-proteins that activate phospholipase C, leading to an increase of the intracellular calcium concentration. Seems to act through a G(q) and G(i)-mediated pathway. Mediates the anti-inflammatory effects of omega-3 polyunsaturated fatty acids (PUFAs) via inhibition of NLRP3 inflammasome activation. In Mus musculus (Mouse), this protein is Free fatty acid receptor 1 (Ffar1).